The chain runs to 608 residues: Probable Ufm1-specific protease 2 (608 aa).

Residues Cys441, Asp565, and His567 contribute to the active site.

Belongs to the peptidase C78 family.

Its function is as follows. Thiol protease which recognizes and hydrolyzes the peptide bond at the C-terminal Gly of UFM1, a ubiquitin-like modifier protein bound to a number of target proteins. Does not hydrolyze SUMO1 or ISG15 ubiquitin-like proteins. In Drosophila pseudoobscura pseudoobscura (Fruit fly), this protein is Probable Ufm1-specific protease 2.